A 376-amino-acid polypeptide reads, in one-letter code: MHLSQIVLYLSLLIALGPVVLSDQEAHQQPSVSTPVDTDQCATCEVRQQIKTMRLNAIKSQILSKLRMKEAPNISREIVKQLLPKAPPLQQLLDQYDVLGDDNREEVLEDDDEHATTETIVMVATEPDPAVQVDGQPKCCFFSITQKFQASRVVRAQLWVHLRPSEEVTTVFLQISRLIPVTDGNRHIRSRSLKIDVNPGPASWQSIDVKQVLTVWLRQPETNWGIEINAFDSRGNDLAVTSAEPGEEGLQPFMEVKISEGPRRARRDSGLDCDENSPESRCCRYPLTVDFEDFGWDWIIAPKRYKANYCSGECEYMHLQKYPHTHLVNKANPRGTAGPCCTPTKMSPINMLYFNRKEQIIYGKIPSMVVDRCGCS.

Residues 1–22 (MHLSQIVLYLSLLIALGPVVLS) form the signal peptide. Residues 23 to 267 (DQEAHQQPSV…ISEGPRRARR (245 aa)) constitute a propeptide that is removed on maturation. Disulfide bonds link Cys273–Cys283, Cys282–Cys341, Cys310–Cys373, and Cys314–Cys375.

It belongs to the TGF-beta family. Homodimer; disulfide-linked. Highly expressed in muscle. Also expressed in other tissues such as eye, gill, ovary, gut and brain. Very low level detected in testis. Not expressed in liver, kidney, stomach or heart.

Its subcellular location is the secreted. Its function is as follows. Acts specifically as a negative regulator of skeletal muscle growth. This chain is Growth/differentiation factor 8, found in Oreochromis mossambicus (Mozambique tilapia).